The primary structure comprises 596 residues: Alpha-1,3-galactosidase A (596 aa).

The signal sequence occupies residues 1-21 (MQNPVASLLFILAMLTGPCPA). The tract at residues 23 to 57 (DYPERTERTQSAGNHVWHIDPDKGNDGNPGTAPST) is disordered. PbH1 repeat units lie at residues 351 to 373 (RGKI…NVHG), 482 to 504 (RKPV…LVED), 515 to 537 (VRNM…QIVP), and 547 to 569 (HRNI…RIRH).

The protein belongs to the glycosyl hydrolase 110 family. A subfamily.

The catalysed reaction is Hydrolysis of terminal, non-reducing branched (1-&gt;3)-alpha-D-galactosidic residues, producing free D-galactose.. The enzyme catalyses Hydrolysis of terminal, non-reducing alpha-D-galactose residues in alpha-D-galactosides, including galactose oligosaccharides, galactomannans and galactolipids.. Alpha-galactosidase that specifically removes branched alpha-1,3-linked galactose residues present in blood group B antigens. Has no activity toward linear alpha-1,3-linked galactose residues. This is Alpha-1,3-galactosidase A (glaA) from Akkermansia muciniphila (strain ATCC BAA-835 / DSM 22959 / JCM 33894 / BCRC 81048 / CCUG 64013 / CIP 107961 / Muc).